Here is a 431-residue protein sequence, read N- to C-terminus: Adenylosuccinate synthetase (431 aa).

GTP contacts are provided by residues 13 to 19 (GDEGKGK) and 41 to 43 (GHT). The active-site Proton acceptor is Asp-14. Positions 14 and 41 each coordinate Mg(2+). IMP contacts are provided by residues 14-17 (DEGK), 39-42 (NAGH), Thr-130, Arg-144, Gln-225, Thr-240, and Arg-304. The Proton donor role is filled by His-42. 300–306 (ATTGRKR) lines the substrate pocket. Residues Arg-306, 332-334 (KLD), and 415-417 (STG) contribute to the GTP site.

This sequence belongs to the adenylosuccinate synthetase family. Homodimer. The cofactor is Mg(2+).

Its subcellular location is the cytoplasm. It catalyses the reaction IMP + L-aspartate + GTP = N(6)-(1,2-dicarboxyethyl)-AMP + GDP + phosphate + 2 H(+). The protein operates within purine metabolism; AMP biosynthesis via de novo pathway; AMP from IMP: step 1/2. Functionally, plays an important role in the de novo pathway of purine nucleotide biosynthesis. Catalyzes the first committed step in the biosynthesis of AMP from IMP. This chain is Adenylosuccinate synthetase, found in Shewanella amazonensis (strain ATCC BAA-1098 / SB2B).